The chain runs to 699 residues: D-(-)-3-hydroxybutyrate oligomer hydrolase (699 aa).

Positions 1–33 (MTAIRGGSRRAPGLALALLGGVLLGACHGDENA) are cleaved as a signal peptide. Catalysis depends on Ser311, which acts as the Charge relay system.

Belongs to the D-(-)-3-hydroxybutyrate oligomer hydrolase family.

It localises to the secreted. The catalysed reaction is (3R)-hydroxybutanoate dimer + H2O = 2 (R)-3-hydroxybutanoate + H(+). Its pathway is lipid metabolism; butanoate metabolism. Functionally, participates in the degradation of poly-3-hydroxybutyrate (PHB). It works downstream of poly(3-hydroxybutyrate) depolymerase, hydrolyzing D(-)-3-hydroxybutyrate oligomers of various length (3HB-oligomers) into 3HB-monomers. This Burkholderia mallei (strain SAVP1) protein is D-(-)-3-hydroxybutyrate oligomer hydrolase.